Consider the following 209-residue polypeptide: Pyridoxine/pyridoxamine 5'-phosphate oxidase (209 aa).

Residues R7–Y10 and K64 each bind substrate. FMN-binding positions include R59 to K64, F74 to T75, R80, and K81. Residues Y121, R125, and S129 each coordinate substrate. FMN is bound by residues Q138–S139 and W182. Substrate is bound at residue R188 to H190. R192 contributes to the FMN binding site.

The protein belongs to the pyridoxamine 5'-phosphate oxidase family. Homodimer. FMN is required as a cofactor.

The enzyme catalyses pyridoxamine 5'-phosphate + O2 + H2O = pyridoxal 5'-phosphate + H2O2 + NH4(+). It carries out the reaction pyridoxine 5'-phosphate + O2 = pyridoxal 5'-phosphate + H2O2. It participates in cofactor metabolism; pyridoxal 5'-phosphate salvage; pyridoxal 5'-phosphate from pyridoxamine 5'-phosphate: step 1/1. Its pathway is cofactor metabolism; pyridoxal 5'-phosphate salvage; pyridoxal 5'-phosphate from pyridoxine 5'-phosphate: step 1/1. Catalyzes the oxidation of either pyridoxine 5'-phosphate (PNP) or pyridoxamine 5'-phosphate (PMP) into pyridoxal 5'-phosphate (PLP). The protein is Pyridoxine/pyridoxamine 5'-phosphate oxidase of Actinobacillus pleuropneumoniae serotype 5b (strain L20).